Here is a 344-residue protein sequence, read N- to C-terminus: Uroporphyrinogen decarboxylase (344 aa).

Residues 23 to 27, Asp-73, Tyr-149, Thr-204, and His-321 each bind substrate; that span reads RQAGR.

Belongs to the uroporphyrinogen decarboxylase family. Homodimer.

It localises to the cytoplasm. The catalysed reaction is uroporphyrinogen III + 4 H(+) = coproporphyrinogen III + 4 CO2. It participates in porphyrin-containing compound metabolism; protoporphyrin-IX biosynthesis; coproporphyrinogen-III from 5-aminolevulinate: step 4/4. Catalyzes the decarboxylation of four acetate groups of uroporphyrinogen-III to yield coproporphyrinogen-III. The chain is Uroporphyrinogen decarboxylase from Francisella tularensis subsp. tularensis (strain FSC 198).